The sequence spans 222 residues: Deoxyribose-phosphate aldolase (222 aa).

Asp-90 functions as the Proton donor/acceptor in the catalytic mechanism. Lys-152 acts as the Schiff-base intermediate with acetaldehyde in catalysis. Lys-181 (proton donor/acceptor) is an active-site residue.

The protein belongs to the DeoC/FbaB aldolase family. DeoC type 1 subfamily.

It localises to the cytoplasm. The enzyme catalyses 2-deoxy-D-ribose 5-phosphate = D-glyceraldehyde 3-phosphate + acetaldehyde. Its pathway is carbohydrate degradation; 2-deoxy-D-ribose 1-phosphate degradation; D-glyceraldehyde 3-phosphate and acetaldehyde from 2-deoxy-alpha-D-ribose 1-phosphate: step 2/2. Functionally, catalyzes a reversible aldol reaction between acetaldehyde and D-glyceraldehyde 3-phosphate to generate 2-deoxy-D-ribose 5-phosphate. This Pectobacterium carotovorum subsp. carotovorum (strain PC1) protein is Deoxyribose-phosphate aldolase.